Here is a 127-residue protein sequence, read N- to C-terminus: Large ribosomal subunit protein bL20 (127 aa).

This sequence belongs to the bacterial ribosomal protein bL20 family.

In terms of biological role, binds directly to 23S ribosomal RNA and is necessary for the in vitro assembly process of the 50S ribosomal subunit. It is not involved in the protein synthesizing functions of that subunit. The sequence is that of Large ribosomal subunit protein bL20 from Bifidobacterium animalis subsp. lactis (strain AD011).